Consider the following 336-residue polypeptide: Atypical chemokine receptor 1 (336 aa).

At 1–63 the chain is on the extracellular side; the sequence is MGNCLHQAEL…CNLLDDSSLP (63 aa). N-linked (GlcNAc...) asparagine glycans are attached at residues asparagine 16 and asparagine 33. Intrachain disulfides connect cysteine 51/cysteine 276 and cysteine 129/cysteine 195. The helical transmembrane segment at 64–84 threads the bilayer; that stretch reads FFILASVLGILASSTVLFMLF. Topologically, residues 85–95 are cytoplasmic; that stretch reads RPLFRWQLCPG. A helical membrane pass occupies residues 96 to 116; sequence WPVLAQLAVGSALFSIVVPIL. Residues 117–129 lie on the Extracellular side of the membrane; sequence APGLGNTRSSALC. The helical transmembrane segment at 130-153 threads the bilayer; sequence SLGYCVWYGSAFAQALLLGCHASL. The Cytoplasmic portion of the chain corresponds to 154-166; sequence GPKLGAGQVPGLT. The helical transmembrane segment at 167-187 threads the bilayer; it reads LGLTVGLWGAAALLTVPITLA. Topologically, residues 188–207 are extracellular; sequence SGASDGLCTPIYSTELKALQ. The helical transmembrane segment at 208 to 228 threads the bilayer; that stretch reads ATHTVACFAIFVLLPLGLFGA. Residues 229-244 lie on the Cytoplasmic side of the membrane; that stretch reads KGVKKALGMGPGPWMT. A helical membrane pass occupies residues 245-265; the sequence is ILWIWFIFWWPHGVVLGLDFL. At 266-287 the chain is on the extracellular side; sequence VRSKLLLLPTCLAQQVLDLLLN. A helical membrane pass occupies residues 288 to 308; the sequence is LAEALTIVHCVATPLLLALFC. Residues 309–336 lie on the Cytoplasmic side of the membrane; the sequence is HQATRTLLPSLPLPERWSSPVDTLGSKS.

This sequence belongs to the G-protein coupled receptor 1 family. Atypical chemokine receptor subfamily.

It localises to the early endosome. It is found in the recycling endosome. Its subcellular location is the membrane. Functionally, atypical chemokine receptor that controls chemokine levels and localization via high-affinity chemokine binding that is uncoupled from classic ligand-driven signal transduction cascades, resulting instead in chemokine sequestration, degradation, or transcytosis. Also known as interceptor (internalizing receptor) or chemokine-scavenging receptor or chemokine decoy receptor. Has a promiscuous chemokine-binding profile, interacting with inflammatory chemokines of both the CXC and the CC subfamilies but not with homeostatic chemokines. Acts as a receptor for chemokines including CCL2, CCL5, CCL7, CCL11, CCL13, CCL14, CCL17, CXCL5, CXCL6, IL8/CXCL8, CXCL11, GRO, RANTES, MCP-1 and TARC. May regulate chemokine bioavailability and, consequently, leukocyte recruitment through two distinct mechanisms: when expressed in endothelial cells, it sustains the abluminal to luminal transcytosis of tissue-derived chemokines and their subsequent presentation to circulating leukocytes; when expressed in erythrocytes, serves as blood reservoir of cognate chemokines but also as a chemokine sink, buffering potential surges in plasma chemokine levels. The sequence is that of Atypical chemokine receptor 1 (ACKR1) from Sapajus apella (Brown-capped capuchin).